We begin with the raw amino-acid sequence, 87 residues long: Large ribosomal subunit protein eL33 (87 aa).

The protein belongs to the eukaryotic ribosomal protein eL33 family.

The polypeptide is Large ribosomal subunit protein eL33 (Pyrococcus woesei).